Here is a 715-residue protein sequence, read N- to C-terminus: Fatty acid oxidation complex subunit alpha (715 aa).

The segment at 1-190 (MTTTSAFMLN…KAGLVDDVVP (190 aa)) is enoyl-CoA hydratase. The segment at 306 to 715 (GPLNSVGILG…WTNGETDQGN (410 aa)) is 3-hydroxyacyl-CoA dehydrogenase.

This sequence in the N-terminal section; belongs to the enoyl-CoA hydratase/isomerase family. In the central section; belongs to the 3-hydroxyacyl-CoA dehydrogenase family. Heterotetramer of two alpha chains (FadJ) and two beta chains (FadI).

The protein localises to the cytoplasm. The catalysed reaction is a (3S)-3-hydroxyacyl-CoA = a (2E)-enoyl-CoA + H2O. It carries out the reaction a 4-saturated-(3S)-3-hydroxyacyl-CoA = a (3E)-enoyl-CoA + H2O. It catalyses the reaction a (3S)-3-hydroxyacyl-CoA + NAD(+) = a 3-oxoacyl-CoA + NADH + H(+). The enzyme catalyses (3S)-3-hydroxybutanoyl-CoA = (3R)-3-hydroxybutanoyl-CoA. It participates in lipid metabolism; fatty acid beta-oxidation. Its function is as follows. Catalyzes the formation of a hydroxyacyl-CoA by addition of water on enoyl-CoA. Also exhibits 3-hydroxyacyl-CoA epimerase and 3-hydroxyacyl-CoA dehydrogenase activities. The sequence is that of Fatty acid oxidation complex subunit alpha from Salmonella agona (strain SL483).